The following is a 284-amino-acid chain: 2-dehydro-3-deoxyphosphooctonate aldolase (284 aa).

Belongs to the KdsA family.

It localises to the cytoplasm. It carries out the reaction D-arabinose 5-phosphate + phosphoenolpyruvate + H2O = 3-deoxy-alpha-D-manno-2-octulosonate-8-phosphate + phosphate. It functions in the pathway carbohydrate biosynthesis; 3-deoxy-D-manno-octulosonate biosynthesis; 3-deoxy-D-manno-octulosonate from D-ribulose 5-phosphate: step 2/3. It participates in bacterial outer membrane biogenesis; lipopolysaccharide biosynthesis. This chain is 2-dehydro-3-deoxyphosphooctonate aldolase, found in Pectobacterium atrosepticum (strain SCRI 1043 / ATCC BAA-672) (Erwinia carotovora subsp. atroseptica).